The sequence spans 476 residues: 3-isopropylmalate dehydratase large subunit (476 aa).

[4Fe-4S] cluster is bound by residues C353, C413, and C416.

Belongs to the aconitase/IPM isomerase family. LeuC type 1 subfamily. In terms of assembly, heterodimer of LeuC and LeuD. [4Fe-4S] cluster serves as cofactor.

It carries out the reaction (2R,3S)-3-isopropylmalate = (2S)-2-isopropylmalate. Its pathway is amino-acid biosynthesis; L-leucine biosynthesis; L-leucine from 3-methyl-2-oxobutanoate: step 2/4. Functionally, catalyzes the isomerization between 2-isopropylmalate and 3-isopropylmalate, via the formation of 2-isopropylmaleate. The sequence is that of 3-isopropylmalate dehydratase large subunit from Photobacterium profundum (strain SS9).